The sequence spans 777 residues: Ribosome biogenesis protein ERB1 (777 aa).

A disordered region spans residues 1 to 122 (MAPTAPAKKR…RPNYRVVEDA (122 aa)). The span at 36-67 (SEDDSDFVASGDEDEEDEDEDEDEDKDEDDEH) shows a compositional bias: acidic residues. WD repeat units follow at residues 430–469 (GHEG…QVWA), 473–513 (SSDE…PEVE), 562–604 (TVRS…SQIP), 606–645 (RKLS…LVKV), 648–687 (PGAR…RPYK), 691–731 (FHPQ…DLME), and 747–777 (VDSL…RLWM).

It belongs to the WD repeat BOP1/ERB1 family. As to quaternary structure, component of the NOP7 complex, composed of ERB1, NOP7 and YTM1. The complex is held together by ERB1, which interacts with NOP7 via its N-terminal domain and with YTM1 via a high-affinity interaction between the seven-bladed beta-propeller domains of the 2 proteins. The NOP7 complex associates with the 66S pre-ribosome.

Its subcellular location is the nucleus. It is found in the nucleolus. The protein resides in the nucleoplasm. Its function is as follows. Component of the NOP7 complex, which is required for maturation of the 25S and 5.8S ribosomal RNAs and formation of the 60S ribosome. This Pyricularia oryzae (strain 70-15 / ATCC MYA-4617 / FGSC 8958) (Rice blast fungus) protein is Ribosome biogenesis protein ERB1.